Consider the following 353-residue polypeptide: Thiamine-phosphate synthase (353 aa).

The segment at 1–128 (MKSMPFAPIA…AASAAAIRYG (128 aa)) is unknown. The segment at 129 to 353 (LYDLEVTVLQ…TSLQLLEALR (225 aa)) is thiamine-phosphate synthase. Residues 185 to 189 (QYRNK) and Asn-217 contribute to the 4-amino-2-methyl-5-(diphosphooxymethyl)pyrimidine site. Residues Asp-218 and Asp-237 each coordinate Mg(2+). Ser-256 serves as a coordination point for 4-amino-2-methyl-5-(diphosphooxymethyl)pyrimidine. 282–284 (TAT) serves as a coordination point for 2-[(2R,5Z)-2-carboxy-4-methylthiazol-5(2H)-ylidene]ethyl phosphate. Lys-285 lines the 4-amino-2-methyl-5-(diphosphooxymethyl)pyrimidine pocket. Gly-312 is a 2-[(2R,5Z)-2-carboxy-4-methylthiazol-5(2H)-ylidene]ethyl phosphate binding site.

Belongs to the thiamine-phosphate synthase family. The cofactor is Mg(2+).

The enzyme catalyses 2-[(2R,5Z)-2-carboxy-4-methylthiazol-5(2H)-ylidene]ethyl phosphate + 4-amino-2-methyl-5-(diphosphooxymethyl)pyrimidine + 2 H(+) = thiamine phosphate + CO2 + diphosphate. The catalysed reaction is 2-(2-carboxy-4-methylthiazol-5-yl)ethyl phosphate + 4-amino-2-methyl-5-(diphosphooxymethyl)pyrimidine + 2 H(+) = thiamine phosphate + CO2 + diphosphate. It carries out the reaction 4-methyl-5-(2-phosphooxyethyl)-thiazole + 4-amino-2-methyl-5-(diphosphooxymethyl)pyrimidine + H(+) = thiamine phosphate + diphosphate. It participates in cofactor biosynthesis; thiamine diphosphate biosynthesis; thiamine phosphate from 4-amino-2-methyl-5-diphosphomethylpyrimidine and 4-methyl-5-(2-phosphoethyl)-thiazole: step 1/1. Its function is as follows. Condenses 4-methyl-5-(beta-hydroxyethyl)thiazole monophosphate (THZ-P) and 2-methyl-4-amino-5-hydroxymethyl pyrimidine pyrophosphate (HMP-PP) to form thiamine monophosphate (TMP). The sequence is that of Thiamine-phosphate synthase from Prochlorococcus marinus (strain MIT 9313).